The primary structure comprises 302 residues: Short-chain dehydrogenase/reductase 1 (302 aa).

NADP(+) contacts are provided by residues 20-23, Arg43, 71-72, and Asn98; these read NKGL and DV. Substrate is bound at residue Ser170. Residues Tyr226, Lys230, and 257–262 contribute to the NADP(+) site; that span reads VKTDIN. The Proton acceptor role is filled by Tyr226.

The protein belongs to the short-chain dehydrogenases/reductases (SDR) family. Mainly expressed in flowers and flower buds, to a lesser extent in leaves and, at low levels, in stems and roots.

It participates in secondary metabolite biosynthesis; terpenoid biosynthesis. In terms of biological role, component of the oleanane-type triterpene saponins (e.g. saponarioside A and saponarioside B) biosynthetic pathway, leading to the production of natural products with detergent properties used as traditional sources of soap. A dehydrogenase/reductase that, together with UGT74CD1, mediates the conversion of QA-tri to QA-triF; UGT74CD1 may transfer 4-keto-6-deoxy-glucose to QA-tri, which is in turn reduced to D-fucose by SDR1, thus leading to QA-triF formation via the initiation of the C-28 sugar chain. This Saponaria officinalis (Common soapwort) protein is Short-chain dehydrogenase/reductase 1.